The sequence spans 384 residues: Urea transporter 1 (384 aa).

The next 5 helical transmembrane spans lie at 61 to 81, 85 to 105, 111 to 131, 138 to 158, and 168 to 188; these read ISQV…AGLL, PWWA…ALLL, AIAA…MAVF, FWWL…FSSA, and LPVF…ATGH. An N-linked (GlcNAc...) asparagine glycan is attached at Asn-206. Transmembrane regions (helical) follow at residues 250-270, 279-299, 305-325, and 327-347; these read LMCL…LSLA, GLWG…FMAL, LLAL…THLM, and AVHL…FLLL.

The protein belongs to the urea transporter family. As to quaternary structure, homotrimer; each subunit contains a pore through which urea permeates. Identified in a complex with STOM. Expressed in brain, spleen, kidney, testis and lung, with highest levels in brain.

It localises to the cell membrane. The protein resides in the basolateral cell membrane. It carries out the reaction urea(in) = urea(out). In terms of biological role, mediates the transport of urea driven by a concentration gradient across the cell membrane. Mediates the transport of urea across the cell membranes of erythrocytes and the renal inner medullary collecting duct which is critical to the urinary concentrating mechanism. Facilitates water transport in erythrocytes. The polypeptide is Urea transporter 1 (Slc14a1) (Rattus norvegicus (Rat)).